A 156-amino-acid chain; its full sequence is Cytochrome c-type biogenesis protein CcmE 1 (156 aa).

Topologically, residues 1–8 (MNATRKQR) are cytoplasmic. The chain crosses the membrane as a helical; Signal-anchor for type II membrane protein span at residues 9–29 (LCLVIGVLAAAALAVTLIVFA). Over 30-156 (LQRNMSYLFT…ATAAPLTTPR (127 aa)) the chain is Periplasmic. 2 residues coordinate heme: histidine 123 and tyrosine 127.

It belongs to the CcmE/CycJ family.

It is found in the cell inner membrane. Heme chaperone required for the biogenesis of c-type cytochromes. Transiently binds heme delivered by CcmC and transfers the heme to apo-cytochromes in a process facilitated by CcmF and CcmH. In Xanthomonas oryzae pv. oryzae (strain MAFF 311018), this protein is Cytochrome c-type biogenesis protein CcmE 1.